We begin with the raw amino-acid sequence, 388 residues long: Flavin-dependent monooxygenase (388 aa).

Arg54 contacts NADPH. Residues Asp61, Arg117, and Asp311 each coordinate FAD.

The protein belongs to the aromatic-ring hydroxylase family. TetX subfamily. In terms of assembly, monomer. The cofactor is FAD.

Its subcellular location is the cytoplasm. The enzyme catalyses a tetracycline + NADPH + O2 + H(+) = an 11a-hydroxytetracycline + NADP(+) + H2O. It carries out the reaction tetracycline + NADPH + O2 + H(+) = 11a-hydroxytetracycline + NADP(+) + H2O. It catalyses the reaction oxytetracycline + NADPH + O2 + H(+) = 11a-hydroxy-oxytetracycline + NADP(+) + H2O. Functionally, an FAD-requiring monooxygenase active on some tetracycline antibiotic derivatives, which leads to their inactivation. Hydroxylates carbon 11a of tetracycline and some analogs. Confers resistance to tetracycline via an oxidoreductase activity; NADPH is more active than NAD. Expression in E.coli leads to breakdown of tetracycline. Confers resistance to doxycycline, chlortetracycline, oxytetracycline and minocycline. The sequence is that of Flavin-dependent monooxygenase from Bacteroides fragilis.